We begin with the raw amino-acid sequence, 509 residues long: Tyrosine-protein phosphatase non-receptor type substrate 1 (509 aa).

A signal peptide spans 1–31 (MEPAGPAPGRLGPLLFCLLLSASCFCAGASG). The Ig-like V-type domain occupies 32–138 (KELKVTQADK…IVEPDTEIKS (107 aa)). The Extracellular portion of the chain corresponds to 32-373 (KELKVTQADK…PDNNAYYNWN (342 aa)). 13 N-linked (GlcNAc...) asparagine glycosylation sites follow: Asn-54, Asn-93, Asn-169, Asn-181, Asn-205, Asn-209, Asn-242, Asn-246, Asn-271, Asn-293, Asn-312, Asn-320, and Asn-345. The cysteines at positions 55 and 122 are disulfide-linked. 2 consecutive Ig-like C1-type domains span residues 150-248 (PSSP…ANFS) and 255-349 (PTLK…HTVR). Cysteines 172 and 229 form a disulfide. A disulfide bridge connects residues Cys-274 and Cys-332. A helical membrane pass occupies residues 374–394 (VFIGVGVACALLVVLLMAALY). Residues 395–509 (LLRIKQKKAK…EYASVQVQRK (115 aa)) are Cytoplasmic-facing. Tyr-436 is modified (phosphotyrosine; by Tyr-kinases). The short motif at 436 to 439 (YADL) is the SH2-binding element. The disordered stretch occupies residues 441–472 (LPKEKKPAPRVPEPNNHTEYASIETGKLPRPE). An SH3-binding motif is present at residues 446–451 (KPAPRV). Residues Tyr-460, Tyr-477, and Tyr-501 each carry the phosphotyrosine; by Tyr-kinases modification. 3 consecutive short sequence motifs (SH2-binding) follow at residues 460-463 (YASI), 477-480 (YADL), and 501-504 (YASV). Positions 485-509 (LNRAQPTPKPEPSFSEYASVQVQRK) are disordered. Residues 500-509 (EYASVQVQRK) are compositionally biased toward polar residues.

Binds PTPN11 when tyrosine-phosphorylated, except in macrophages, where it primarily binds PTPN6. Binds GRB2 in vitro. Binds FGR. Binds JAK2 irrespective of its phosphorylation status and forms a stable complex. Binds SCAP1 and/or SCAP2. The resulting complex recruits FYB1. Binds PTK2B. Interacts with TRIM2. Post-translationally, N-glycosylated. Phosphorylated on tyrosine residues in response to insulin, cell adhesion or epidermal growth factors. Dephosphorylated by PTPN11. As to expression, highly expressed in brain, spleen, lung, liver and kidney. Detected at lower levels in heart. Highly expressed in alveolar and peritoneal macrophages, and at lower levels in dendritic cells.

The protein resides in the membrane. Functionally, immunoglobulin-like cell surface receptor for CD47. Acts as docking protein and induces translocation of PTPN6, PTPN11 and other binding partners from the cytosol to the plasma membrane. Supports adhesion of cerebellar neurons, neurite outgrowth and glial cell attachment. May play a key role in intracellular signaling during synaptogenesis and in synaptic function. Involved in the negative regulation of receptor tyrosine kinase-coupled cellular responses induced by cell adhesion, growth factors or insulin. Mediates negative regulation of phagocytosis, mast cell activation and dendritic cell activation. CD47 binding prevents maturation of immature dendritic cells and inhibits cytokine production by mature dendritic cells. Plays a role in antiviral immunity and limits new world arenavirus infection by decreasing virus internalization. Receptor for THBS1. Interaction with THBS1 stimulates phosphorylation of SIRPA. In response to THBS1, involved in ROS signaling in non-phagocytic cells, stimulating NADPH oxidase-derived ROS production. In Rattus norvegicus (Rat), this protein is Tyrosine-protein phosphatase non-receptor type substrate 1 (Sirpa).